We begin with the raw amino-acid sequence, 562 residues long: MLHKKPQRANENGISQRKKPSDQDNSSVKEGDVAGVHQLATLLMLLDPSDDVSRILCTDALYQLDRIEEAHKMLSLALSNSSQRSPILSRLALLQFKKGFIYDGNQLIKKVIQIGDTSCLLPIMDIFKEEDRKLMQNHCHAKALSILQSQQGDSYIKEAIAYLSFAIIASGGHAKDSLLARARCYGQLGQKKTAIFDFNAILKDEPYNAEALSGKGFMHLTLNQQKEAVHDICLAIKADASYAIREIHSLKPEAQLIITEWVYNHCRTLLAELLTANNNFQSDPTFNELEVLAEALIKTDNKAAHFHILYTDILIAKEKYDEAFNYLRKSFNGNAIDETVRARYGVLHVKYRNLLVAAQELCTLAGKQPEEVEILVKFMDKRERQSLFQAAGQEGNSLIQENQHEKALDYYSLAVISSNNNPKYLRQRAMCLTHLRDYSSAIKDIDKAILRHSSHDLKTQAEDYCSKGHILLLSCDEDAATTQYMKAISMEHASAVASINNMPGRVKLAGIFSQVANRYFEQRLFEESWKMSECGLLIDENNQELKRLKARIKREASGCIVH.

A disordered region spans residues 1 to 30; sequence MLHKKPQRANENGISQRKKPSDQDNSSVKE. Over residues 19-30 the composition is skewed to basic and acidic residues; that stretch reads KPSDQDNSSVKE. TPR repeat units lie at residues 51–84, 175–208, 210–242, 304–337, 388–421, 423–455, 461–494, and 509–542; these read DVSRILCTDALYQLDRIEEAHKMLSLALSNSSQR, KDSLLARARCYGQLGQKKTAIFDFNAILKDEPYN, EALSGKGFMHLTLNQQKEAVHDICLAIKADASY, AHFHILYTDILIAKEKYDEAFNYLRKSFNGNAID, FQAAGQEGNSLIQENQHEKALDYYSLAVISSNNN, KYLRQRAMCLTHLRDYSSAIKDIDKAILRHSSH, AEDYCSKGHILLLSCDEDAATTQYMKAISMEHAS, and AGIFSQVANRYFEQRLFEESWKMSECGLLIDENN.

The protein is Tetratricopeptide repeat protein 34 (ttc34) of Xenopus laevis (African clawed frog).